Reading from the N-terminus, the 1204-residue chain is ATP-dependent helicase/nuclease subunit A (1204 aa).

The UvrD-like helicase ATP-binding domain occupies 2–472 (PQFTKEQEKA…ILLSDNFRST (471 aa)). 23 to 30 (ASAGSGKT) provides a ligand contact to ATP. One can recognise a UvrD-like helicase C-terminal domain in the interval 500-783 (GQLIFGAKYY…RLMTIHGSKG (284 aa)).

Belongs to the helicase family. AddA subfamily. As to quaternary structure, heterodimer of AddA and AddB/RexB. Requires Mg(2+) as cofactor.

The catalysed reaction is Couples ATP hydrolysis with the unwinding of duplex DNA by translocating in the 3'-5' direction.. It carries out the reaction ATP + H2O = ADP + phosphate + H(+). Its function is as follows. The heterodimer acts as both an ATP-dependent DNA helicase and an ATP-dependent, dual-direction single-stranded exonuclease. Recognizes the chi site generating a DNA molecule suitable for the initiation of homologous recombination. The AddA nuclease domain is required for chi fragment generation; this subunit has the helicase and 3' -&gt; 5' nuclease activities. The polypeptide is ATP-dependent helicase/nuclease subunit A (Lactobacillus helveticus (strain DPC 4571)).